The sequence spans 521 residues: Runt-related transcription factor 2 (521 aa).

Disordered stretches follow at residues 18–59 (FWDP…QQQQ) and 222–340 (DGPR…RRIS). Low complexity-rich tracts occupy residues 21 to 33 (PSTSRRFSPPSSS) and 47 to 59 (AAQQQQQQQQQQQ). Residues 101-229 (TMVEIIADHP…TVDGPREPRR (129 aa)) enclose the Runt domain. K238 participates in a covalent cross-link: Glycyl lysine isopeptide (Lys-Gly) (interchain with G-Cter in SUMO2). The interval 242-258 (FSDRLSDLGRIPHPSMR) is required for interaction with FOXO1. R267 is modified (asymmetric dimethylarginine). The segment covering 267 to 326 (RPSLNSAPSPFNPQGQSQITDPRQAQSSPPWSYDQSYPSYLSQMTSPSIHSTTPLSSTRG) has biased composition (polar residues). Residues 336–439 (PRRISDDDTA…SQSQSGPFQT (104 aa)) are interaction with KAT6A. Residue S340 is modified to Phosphoserine. Positions 374-468 (RQFPSISSLT…VPGGDRSPSR (95 aa)) are interaction with KAT6B. Phosphoserine; by CDK1 is present on S451. Positions 460–521 (PGGDRSPSRM…RMDESVWRPY (62 aa)) are disordered. 2 stretches are compositionally biased toward polar residues: residues 473 to 492 (CTTTSNGSTLLNPNLPNQND) and 499 to 511 (SHSSSPTVLNSSG). Over residues 512 to 521 (RMDESVWRPY) the composition is skewed to basic and acidic residues.

Heterodimer of an alpha and a beta subunit. The alpha subunit binds DNA as a monomer and through the Runt domain. DNA-binding is increased by heterodimerization. Interacts with XRCC6 (Ku70) and XRCC5 (Ku80). Interacts with HIVEP3. Interacts with IFI204. Interaction with SATB2; the interaction results in enhanced DNA binding and transactivation by these transcription factors. Binds to HIPK3. Interacts with FOXO1 (via a C-terminal region); the interaction inhibits RUNX2 transcriptional activity towards BGLAP. This interaction is prevented on insulin or IGF1 stimulation as FOXO1 is exported from the nucleus. Interacts with CCNB1, KAT6A and KAT6B. Interacts with FOXP3. Interacts with TMEM119. Interacts with OLFM2. Interacts with IPO7; the interaction inhibits RUNX2 nuclear translocation in osteoblasts. As to quaternary structure, interacts with DDX5. In terms of processing, phosphorylated; probably by MAP kinases (MAPK). Phosphorylation by HIPK3 is required for the SPEN/MINT and FGF2 transactivation during osteoblastic differentiation. Phosphorylation at Ser-451 by CDK1 promotes endothelial cell proliferation required for tumor angiogenesis probably by facilitating cell cycle progression. Isoform 3 is phosphorylated on Ser-340. In terms of tissue distribution, specifically expressed in osteoblasts.

It localises to the nucleus. Its subcellular location is the cytoplasm. In terms of biological role, transcription factor involved in osteoblastic differentiation and skeletal morphogenesis. Essential for the maturation of osteoblasts and both intramembranous and endochondral ossification. CBF binds to the core site, 5'-PYGPYGGT-3', of a number of enhancers and promoters, including murine leukemia virus, polyomavirus enhancer, T-cell receptor enhancers, osteocalcin, osteopontin, bone sialoprotein, alpha 1(I) collagen, LCK, IL-3 and GM-CSF promoters. In osteoblasts, supports transcription activation: synergizes with SPEN/MINT to enhance FGFR2-mediated activation of the osteocalcin FGF-responsive element (OCFRE). Inhibits KAT6B-dependent transcriptional activation. This chain is Runt-related transcription factor 2 (RUNX2), found in Homo sapiens (Human).